The following is an 84-amino-acid chain: Kidney-associated antigen 1 (84 aa).

The segment at 31-84 (PGAAAAHLPRWPPPQLAASRREAPPLSQRPHRTQGAGSPPETNEKLTNPQVKEK) is disordered. Positions 75–84 (KLTNPQVKEK) are enriched in polar residues.

As to expression, expressed in testis and kidney, and, at lower levels, in urinary bladder and liver. Expressed by a high proportion of tumors of various histologic origin, including melanomas, sarcomas and colorectal carcinomas.

The protein is Kidney-associated antigen 1 (KAAG1) of Homo sapiens (Human).